A 177-amino-acid chain; its full sequence is Large ribosomal subunit protein uL6 (177 aa).

Belongs to the universal ribosomal protein uL6 family. Part of the 50S ribosomal subunit.

In terms of biological role, this protein binds to the 23S rRNA, and is important in its secondary structure. It is located near the subunit interface in the base of the L7/L12 stalk, and near the tRNA binding site of the peptidyltransferase center. The chain is Large ribosomal subunit protein uL6 from Vibrio atlanticus (strain LGP32) (Vibrio splendidus (strain Mel32)).